A 513-amino-acid chain; its full sequence is Histidine ammonia-lyase (513 aa).

A cross-link (5-imidazolinone (Ala-Gly)) is located at residues 144-146 (ASG). A 2,3-didehydroalanine (Ser) modification is found at serine 145.

The protein belongs to the PAL/histidase family. Contains an active site 4-methylidene-imidazol-5-one (MIO), which is formed autocatalytically by cyclization and dehydration of residues Ala-Ser-Gly.

The protein localises to the cytoplasm. The catalysed reaction is L-histidine = trans-urocanate + NH4(+). It functions in the pathway amino-acid degradation; L-histidine degradation into L-glutamate; N-formimidoyl-L-glutamate from L-histidine: step 1/3. The chain is Histidine ammonia-lyase from Streptococcus pyogenes serotype M18 (strain MGAS8232).